Here is a 212-residue protein sequence, read N- to C-terminus: Photosynthetic NDH subunit of subcomplex B 5, chloroplastic (212 aa).

The transit peptide at 1-48 (MATVTILSPKSIPKVTDSKFGARVSDQIVNVVKCGKSGRRLKLAKLVS) directs the protein to the chloroplast. 2 helical membrane-spanning segments follow: residues 115–135 (FQGLISCMFLPAIALGMYFDA) and 136–156 (PGEYLFIGAALFTVVFCIIEM).

As to quaternary structure, part of the chloroplast NDH complex, composed of a mixture of chloroplast and nucleus encoded subunits. Component of the NDH subcomplex B, at least composed of PnsB1, PnsB2, PnsB3, PnsB4 and PnsB5.

It is found in the plastid. The protein resides in the chloroplast membrane. In terms of biological role, NDH shuttles electrons from NAD(P)H:plastoquinone, via FMN and iron-sulfur (Fe-S) centers, to quinones in the photosynthetic chain and possibly in a chloroplast respiratory chain. The immediate electron acceptor for the enzyme in this species is believed to be plastoquinone. Couples the redox reaction to proton translocation, and thus conserves the redox energy in a proton gradient. The sequence is that of Photosynthetic NDH subunit of subcomplex B 5, chloroplastic from Arabidopsis thaliana (Mouse-ear cress).